Here is a 1064-residue protein sequence, read N- to C-terminus: MRRRYSHDPPGSFRETKVFGFRGEYGCKALVDLLAGKGSQLLQVRDKMPDSPLGSQSNESRIPKHSEALLSRVGNDPELGSPSHRLASLMLVEGLTDLQLKEHDFTQVEATRGVWHPARVITLDRLFLPLSRVSIPPRVSLTIGVAGVGKTTLVRHFVHCWARGQVGKGFSRVLPLTFRDLNTYEKLSADRLIQSIFSSIGEASLVATAPDRVLLVLDGLDECKTPLEFSNTMACSDPKKEIQVDHLITNIIRGNLFPEISVWITSRPSAAGQIPGGLVDRMTEIRGLTEEEIKVCLEQMFPEEQNLLGQVLSQVQANRALYLMCTVPAFCRLTGLALGHLYRTRLAVQDIELPLPQTLCELYSWYFRMALGGEGQDKEKVSPRIKQVTQGARKMVGTLGRLAFHGLVKKKYVFYEQDMKAFGVDLALLQNTLCSCLLQREETLASSVAYCFIHLSLQEFVAATYYYSASKRAIFDLFTESGMSWPRLGFLAHFRCAAQRATQAKDGRLDVFLRFLSGLLSPRVNTLLAGSLLSQGEHQSYRDQVAEVLQGFLHPDAAVCARAINVLYCLSELRHTELACSVEEAMRSGTLAGMTSPSHRTALAYLLQMSDICSPEADFSLCLSQHVLQSLLPQLLYCQSLRLDNNQFQDPVMELLGSVLSGKDCRIRKISLAENQIGNKGAKALARSLLVNRSLITLDLRSNSIGPPGAKALADALKINRTLTSLSLQSNVIKDDGVMCVAEALVSNQTISMLQLQKNLIGLIGAQQMADALKQNRSLKALMFSSNTIGDRGAIALAEALKVNQILENLDLQSNSISDMGVTVLMRALCSNQTLSSLNLRENSISPEGAQALTQALCRNNTLKHLDLTANLLHDRGAQAIAVAVGENHSLTHLHLQWNFIQAGAARALGQALQLNRTLTTLDLQENAIGDEGASSVAGALKVNTTLIALYLQVASIGSQGAQALGEALTVNRTLEILDLRGNDVGAAGAKALANALKLNSSLRRLNLQENSLGMDGAIFVASALSENHGLHHINLQGNPIGESAARMISEAIKTNAPTCTVEI.

The 322-residue stretch at 138 to 459 (RVSLTIGVAG…YCFIHLSLQE (322 aa)) folds into the NACHT domain. 144-151 (GVAGVGKT) contacts ATP. LRR repeat units lie at residues 338-362 (LGHL…LCEL), 570-593 (LSEL…TLAG), 632-662 (LPQL…VLSG), 664-687 (DCRI…ALAR), 692-715 (NRSL…ALAD), 720-743 (NRTL…CVAE), 748-771 (NQTI…QMAD), 776-799 (NRSL…ALAE), 804-827 (NQIL…VLMR), 832-855 (NQTL…ALTQ), 860-883 (NNTL…AIAV), 888-911 (NHSL…ALGQ), 916-939 (NRTL…SVAG), 972-995 (NRTL…ALAN), 1000-1022 (NSSL…IFVA), and 1028-1051 (NHGL…MISE).

It belongs to the NLRP family. As to quaternary structure, directly interacts (via CARD) with TMEM173/STING; this interaction reduces TMEM173 trafficking to the perinuclear region in response to interferon stimulatory DNA. Also interacts, but to a lesser extent, with TBK1. Interacts with TRAF6; this interaction results in decreased TRAF6 'Lys-63'-linked polyubiquitination, but leaves 'Lys-48'-linked chains unchanged, promoting TRAF6 protein degradation. Interacts with PIK3R1/PIK3R2; this interaction disrupts the association between PIK3R1/PIK3R2 and the p110 catalytic subunit PIK3CA/PIK3CB/PIK3CD and reduces PIK3R1/PIK3R2 activation. Weakly interacts with PYCARD/ASC. Interacts with CASP1 and CASP5. As to expression, expressed in bone marrow-derived macrophages.

It localises to the cytoplasm. Functionally, negative regulator of the innate immune response. Attenuates signaling pathways activated by Toll-like receptors (TLRs) and the DNA sensor STING/TMEM173 in response to pathogen-associated molecular patterns, such as intracellular poly(dA:dT), but not poly(I:C), or in response to DNA virus infection, including that of Herpes simplex virus 1 (HSV1). May affect TLR4 signaling by acting at the level of TRAF6 ubiquitination, decreasing the activating 'Lys-63'-linked ubiquitination and leaving unchanged the degradative 'Lys-48'-linked ubiquitination. Inhibits the PI3K-AKT-mTOR pathway possibly by directly interacting with the posphatidylinositol 3-kinase regulatory subunit p85 (PIK3R1/PIK3R2) and disrupting the association between PIK3R1/PIK3R2 and the catalytic subunit p110 (PIK3CA/PIK3CB/PIK3CD) and reducing PIK3R1/PIK3R2 activation. Via its regulation of the PI3K-AKT-mTOR pathway, controls cell proliferation, predominantly in intestinal epithelial cells. May also affect NOD1- or NOD2-mediated NF-kappa-B activation. Might also affect the inflammatory response by preventing NLRP3 inflammasome formation, CASP1 cleavage and IL1B maturation. The chain is Protein NLRC3 (Nlrc3) from Mus musculus (Mouse).